Reading from the N-terminus, the 538-residue chain is Zinc finger protein with KRAB and SCAN domains 3 (538 aa).

Ser42 carries the post-translational modification Phosphoserine. The SCAN box domain occupies 46–128 (RERFRGFRYP…VLLEYLERQL (83 aa)). A Glycyl lysine isopeptide (Lys-Gly) (interchain with G-Cter in SUMO2) cross-link involves residue Lys171. Thr207 is modified (phosphothreonine). The 61-residue stretch at 214–274 (LKVEDVALTL…PAEELPEKEH (61 aa)) folds into the KRAB domain. Residues 226 to 236 (EWTQQDSSQGN) show a composition bias toward polar residues. The disordered stretch occupies residues 226 to 274 (EWTQQDSSQGNLCRDEKQENHGSLVSLGDEKQTKSRDLPPAEELPEKEH). Basic and acidic residues predominate over residues 253-274 (GDEKQTKSRDLPPAEELPEKEH). 5 C2H2-type zinc fingers span residues 314-336 (HICHECGKSFAQSSGLSKHRRIH), 342-364 (YECEECGKAFIGSSALVIHQRVH), 370-392 (YECEECGKAFSHSSDLIKHQRTH), 398-420 (YECDDCGKTFSQSCSLLEHHRIH), and 426-448 (YQCSMCGKAFRRSSHLLRHQRIH). Thr449 is subject to Phosphothreonine. 2 C2H2-type zinc fingers span residues 480–502 (YKCNECERSFTQNTGLIEHQKIH) and 508–530 (YQCNACGKGFTRISYLVQHQRSH).

The protein belongs to the krueppel C2H2-type zinc-finger protein family.

The protein localises to the nucleus. It localises to the cytoplasm. Functionally, transcriptional factor that binds to the consensus sequence 5'-[GT][AG][AGT]GGGG-3' and acts as a repressor of autophagy. Specifically represses expression of genes involved in autophagy and lysosome biogenesis/function such as MAP1LC3B, ULK1 or WIPI2. Associates with chromatin at the ITGB4 and VEGF promoters. Also acts as a transcription activator and promotes cancer cell progression and/or migration in various tumors and myelomas. This Homo sapiens (Human) protein is Zinc finger protein with KRAB and SCAN domains 3 (ZKSCAN3).